The primary structure comprises 644 residues: Exoribonuclease 2 (644 aa).

Residues 189–516 (REDLTALDFV…NHRLLKAVIK (328 aa)) form the RNB domain. In terms of domain architecture, S1 motif spans 561 to 643 (DTRFAAEIVD…ETRSIIARPV (83 aa)).

The protein belongs to the RNR ribonuclease family. RNase II subfamily.

Its subcellular location is the cytoplasm. It catalyses the reaction Exonucleolytic cleavage in the 3'- to 5'-direction to yield nucleoside 5'-phosphates.. In terms of biological role, involved in mRNA degradation. Hydrolyzes single-stranded polyribonucleotides processively in the 3' to 5' direction. The chain is Exoribonuclease 2 from Escherichia coli O139:H28 (strain E24377A / ETEC).